A 200-amino-acid polypeptide reads, in one-letter code: NADH-quinone oxidoreductase subunit C (200 aa).

This sequence belongs to the complex I 30 kDa subunit family. In terms of assembly, NDH-1 is composed of 14 different subunits. Subunits NuoB, C, D, E, F, and G constitute the peripheral sector of the complex.

The protein resides in the cell inner membrane. It carries out the reaction a quinone + NADH + 5 H(+)(in) = a quinol + NAD(+) + 4 H(+)(out). In terms of biological role, NDH-1 shuttles electrons from NADH, via FMN and iron-sulfur (Fe-S) centers, to quinones in the respiratory chain. The immediate electron acceptor for the enzyme in this species is believed to be ubiquinone. Couples the redox reaction to proton translocation (for every two electrons transferred, four hydrogen ions are translocated across the cytoplasmic membrane), and thus conserves the redox energy in a proton gradient. The polypeptide is NADH-quinone oxidoreductase subunit C (Cereibacter sphaeroides (strain ATCC 17029 / ATH 2.4.9) (Rhodobacter sphaeroides)).